The chain runs to 924 residues: Periplasmic nitrate reductase (924 aa).

Residues 1-30 (MNRRDFIKNTAIASAASVAGLSVPSSMLGA) constitute a signal peptide (tat-type signal). One can recognise a 4Fe-4S Mo/W bis-MGD-type domain in the interval 35 to 91 (WKWDKAVCRFCGTGCGIMIARKDGKIVATKGDPAAPVNRGLNCIKGYFNAKIMYGED). Residues Cys-42, Cys-45, Cys-49, and Cys-77 each contribute to the [4Fe-4S] cluster site. Mo-bis(molybdopterin guanine dinucleotide)-binding positions include Lys-79, Gln-147, Asn-172, Cys-176, 209-216 (WGANMAEM), Met-417, Gln-421, Asn-527, 552-553 (SD), Lys-575, Asp-602, and 814-823 (TGRVLEHWHS). Residue Trp-890 participates in substrate binding. Mo-bis(molybdopterin guanine dinucleotide)-binding residues include Asn-898 and Lys-915.

It belongs to the prokaryotic molybdopterin-containing oxidoreductase family. NasA/NapA/NarB subfamily. Component of the periplasmic nitrate reductase NapAB complex composed of NapA and NapB. The cofactor is [4Fe-4S] cluster. Mo-bis(molybdopterin guanine dinucleotide) is required as a cofactor. Post-translationally, predicted to be exported by the Tat system. The position of the signal peptide cleavage has not been experimentally proven.

The protein localises to the periplasm. It catalyses the reaction 2 Fe(II)-[cytochrome] + nitrate + 2 H(+) = 2 Fe(III)-[cytochrome] + nitrite + H2O. In terms of biological role, catalytic subunit of the periplasmic nitrate reductase complex NapAB. Receives electrons from NapB and catalyzes the reduction of nitrate to nitrite. This is Periplasmic nitrate reductase from Campylobacter jejuni subsp. jejuni serotype O:2 (strain ATCC 700819 / NCTC 11168).